Here is a 381-residue protein sequence, read N- to C-terminus: Guanine nucleotide-binding protein G(olf) subunit alpha (381 aa).

Residues 1–25 (MGCLGGNSKTTEDQGVDEKERREAN) are disordered. The N-palmitoyl glycine moiety is linked to residue G2. C3 is lipidated: S-palmitoyl cysteine. The span at 10-25 (TTEDQGVDEKERREAN) shows a compositional bias: basic and acidic residues. Residues 41-381 (ATHRLLLLGA…RMHLKQYELL (341 aa)) form the G-alpha domain. Residues 44-57 (RLLLLGAGESGKST) are G1 motif. GTP-binding residues include E52, S53, G54, K55, S56, and T57. A Mg(2+)-binding site is contributed by S56. T178 carries the post-translational modification Phosphothreonine. Positions 183–191 (DLLRCRVLT) are G2 motif. The GTP site is built by L185 and R186. R188 is subject to ADP-ribosylarginine; by cholera toxin. GTP is bound at residue T191. Mg(2+) is bound by residues T191 and D210. The segment at 206-215 (FHMFDVGGQR) is G3 motif. Positions 213, 279, 280, 282, and 353 each coordinate GTP. The interval 275–282 (ILFLNKQD) is G4 motif. The interval 351–356 (TCAVDT) is G5 motif.

The protein belongs to the G-alpha family. G(s) subfamily. As to quaternary structure, g proteins are composed of 3 units; alpha, beta and gamma. The alpha chain contains the guanine nucleotide binding site. Interacts with GAS2L2. Interacts (GDP-bound form) with RIC8B (via C-terminus); promoting GNAL folding and association with the plasma membrane. As to expression, detected in olfactory neuroepithelium, brain, testis, and to a lower extent in retina, lung alveoli, spleen. Trace amounts where seen in kidney, adrenal gland and liver. Found to be expressed in all the insulinomas examined.

It is found in the cell membrane. The catalysed reaction is GTP + H2O = GDP + phosphate + H(+). Guanine nucleotide-binding protein (G protein) involved as transducer in olfactory signal transduction controlled by G protein-coupled receptors (GPCRs). Contains the guanine nucleotide binding site and alternates between an active, GTP-bound state and an inactive, GDP-bound state. Signaling by an activated GPCR promotes GDP release and GTP binding. The alpha subunit has a low GTPase activity that converts bound GTP to GDP, thereby terminating the signal. Both GDP release and GTP hydrolysis are modulated by numerous regulatory proteins. GNAL/G(olf) alpha specifically mediates olfactory signal transduction within the olfactory neuroepithelium and the basal ganglia following GPCRs activation. Acts by promoting the specific activation of adenylyl cyclase ADCY3, resulting in increased levels of the signaling molecule cAMP. The protein is Guanine nucleotide-binding protein G(olf) subunit alpha of Homo sapiens (Human).